The sequence spans 270 residues: Glutamate 5-kinase (270 aa).

Lys-15 serves as a coordination point for ATP. The substrate site is built by Ser-55, Asp-142, and Asn-158. Residues 178–179 (SD) and 220–226 (TGGMLSK) each bind ATP.

It belongs to the glutamate 5-kinase family.

It localises to the cytoplasm. The catalysed reaction is L-glutamate + ATP = L-glutamyl 5-phosphate + ADP. It functions in the pathway amino-acid biosynthesis; L-proline biosynthesis; L-glutamate 5-semialdehyde from L-glutamate: step 1/2. Catalyzes the transfer of a phosphate group to glutamate to form L-glutamate 5-phosphate. The sequence is that of Glutamate 5-kinase from Streptococcus uberis (strain ATCC BAA-854 / 0140J).